The sequence spans 354 residues: Ferrochelatase (354 aa).

His-214 and Glu-295 together coordinate Fe cation.

This sequence belongs to the ferrochelatase family.

The protein resides in the cytoplasm. The enzyme catalyses heme b + 2 H(+) = protoporphyrin IX + Fe(2+). Its pathway is porphyrin-containing compound metabolism; protoheme biosynthesis; protoheme from protoporphyrin-IX: step 1/1. Its function is as follows. Catalyzes the ferrous insertion into protoporphyrin IX. In Burkholderia lata (strain ATCC 17760 / DSM 23089 / LMG 22485 / NCIMB 9086 / R18194 / 383), this protein is Ferrochelatase.